Here is a 605-residue protein sequence, read N- to C-terminus: SET domain-containing protein SNOG_11806 (605 aa).

The disordered stretch occupies residues 68-132 (TLDLTGMKTP…SRKGTGGLRV (65 aa)). Polar residues predominate over residues 75–89 (KTPQPSRSPTVTRNV). The span at 104 to 115 (ESADDDDDDLQD) shows a compositional bias: acidic residues. In terms of domain architecture, SET spans 473–579 (PPVQIYRTAE…AGSEITVDYG (107 aa)).

It belongs to the class V-like SAM-binding methyltransferase superfamily.

This is SET domain-containing protein SNOG_11806 from Phaeosphaeria nodorum (strain SN15 / ATCC MYA-4574 / FGSC 10173) (Glume blotch fungus).